The chain runs to 673 residues: Beta-galactosidase 8 (673 aa).

The first 20 residues, 1–20, serve as a signal peptide directing secretion; sequence MGPSRSFQNLLLLLLPLALA. Asparagine 38 carries N-linked (GlcNAc...) asparagine glycosylation. Glutamate 189 (proton donor) is an active-site residue. Asparagine 230 carries N-linked (GlcNAc...) asparagine glycosylation. Residue glutamate 272 is the Nucleophile of the active site. N-linked (GlcNAc...) asparagine glycosylation is found at asparagine 304, asparagine 329, asparagine 401, asparagine 489, and asparagine 540.

Belongs to the glycosyl hydrolase 35 family.

It localises to the secreted. The protein resides in the extracellular space. Its subcellular location is the apoplast. It carries out the reaction Hydrolysis of terminal non-reducing beta-D-galactose residues in beta-D-galactosides.. This chain is Beta-galactosidase 8, found in Oryza sativa subsp. japonica (Rice).